A 130-amino-acid chain; its full sequence is Small ribosomal subunit protein uS9 (130 aa).

Belongs to the universal ribosomal protein uS9 family.

The chain is Small ribosomal subunit protein uS9 from Haemophilus influenzae (strain 86-028NP).